A 133-amino-acid chain; its full sequence is Homeobox protein HD-5 (133 aa).

Residues 34–93 constitute a DNA-binding region (homeobox); the sequence is SKRSRLKLSGQQIDVLESNFKIDSHPNSATKSLLSNALSIPLKNIQIWFQNRRAKEKTAR. The tract at residues 86 to 109 is disordered; that stretch reads RAKEKTARDGGRRRSGNAEIEDGE.

The protein resides in the nucleus. The polypeptide is Homeobox protein HD-5 (HD-5) (Encephalitozoon cuniculi (strain GB-M1) (Microsporidian parasite)).